The chain runs to 173 residues: Translationally-controlled tumor protein homolog (173 aa).

In terms of domain architecture, TCTP spans 1 to 173; sequence MIIYKDILTG…WKHGLEEYKV (173 aa).

The protein belongs to the TCTP family.

It is found in the cytoplasm. It localises to the cytoskeleton. Involved in protein synthesis. Involved in microtubule stabilization. This Aspergillus oryzae (strain ATCC 42149 / RIB 40) (Yellow koji mold) protein is Translationally-controlled tumor protein homolog.